The chain runs to 27 residues: Metallothionein-like protein CAP5 (27 aa).

Residues 1 to 18 are compositionally biased toward low complexity; that stretch reads MAPCSCKSCGTSCAGSCT. Residues 1 to 27 form a disordered region; it reads MAPCSCKSCGTSCAGSCTSCSCGSCSH. Cu(+)-binding residues include C4, C6, C9, C13, C20, C22, and C25.

It belongs to the metallothionein superfamily. Type 8 family.

The chain is Metallothionein-like protein CAP5 (CAP5) from Colletotrichum gloeosporioides (Anthracnose fungus).